A 513-amino-acid polypeptide reads, in one-letter code: GMP synthase [glutamine-hydrolyzing] (513 aa).

A Glutamine amidotransferase type-1 domain is found at 3-200; the sequence is SVLVLDFGSQ…LINIAGIRPD (198 aa). The active-site Nucleophile is the Cys80. Catalysis depends on residues His174 and Glu176. Residues 201 to 388 form the GMPS ATP-PPase domain; the sequence is WSSKSFIEHQ…LGIPEDILMR (188 aa). 228–234 contacts ATP; sequence SGGVDST.

Homodimer.

It carries out the reaction XMP + L-glutamine + ATP + H2O = GMP + L-glutamate + AMP + diphosphate + 2 H(+). It participates in purine metabolism; GMP biosynthesis; GMP from XMP (L-Gln route): step 1/1. In terms of biological role, catalyzes the synthesis of GMP from XMP. In Chlorobium luteolum (strain DSM 273 / BCRC 81028 / 2530) (Pelodictyon luteolum), this protein is GMP synthase [glutamine-hydrolyzing].